The chain runs to 284 residues: MDAIKKKMQAMKVDRENAQDLAEQMEQKLKDTETAKAKLEEDFNDLQKKLTTTENNFDVANEQLQEANTKLENSDKQITQLESDVGALQRRLQLLEEDFERSEEKLATTTEKLEEASKAADESERNRKVLEGRSNTAEERIDVLEKQLETAKNVATDADQKFDEAARKLAITEVDLERAETRLEAADAKVHELEEELTVVGANIKTLQVQNDQASQREDSYEETIRDLSKNLKDAETRATEAERQLTKLQKEVDRLEDELLAEKERYKAISDELDQTFAEIAGY.

Positions 1–284 (MDAIKKKMQA…DQTFAEIAGY (284 aa)) form a coiled coil. The segment at 103–133 (EEKLATTTEKLEEASKAADESERNRKVLEGR) is disordered.

It belongs to the tropomyosin family. Homodimer.

Functionally, tropomyosin, in association with the troponin complex, plays a central role in the calcium dependent regulation of muscle contraction. In Chlamys nipponensis akazara (Akazara scallop), this protein is Tropomyosin.